The chain runs to 211 residues: Ribosomal RNA small subunit methyltransferase G (211 aa).

Positions 73, 78, and 141 each coordinate S-adenosyl-L-methionine.

The protein belongs to the methyltransferase superfamily. RNA methyltransferase RsmG family.

Its subcellular location is the cytoplasm. It carries out the reaction guanosine(527) in 16S rRNA + S-adenosyl-L-methionine = N(7)-methylguanosine(527) in 16S rRNA + S-adenosyl-L-homocysteine. Functionally, specifically methylates the N7 position of guanine in position 527 of 16S rRNA. This Jannaschia sp. (strain CCS1) protein is Ribosomal RNA small subunit methyltransferase G.